A 433-amino-acid polypeptide reads, in one-letter code: 3-phosphoshikimate 1-carboxyvinyltransferase (433 aa).

Positions 22, 23, and 27 each coordinate 3-phosphoshikimate. K22 lines the phosphoenolpyruvate pocket. Phosphoenolpyruvate contacts are provided by G95 and R123. S167, Q169, D315, and K342 together coordinate 3-phosphoshikimate. Q169 is a phosphoenolpyruvate binding site. D315 functions as the Proton acceptor in the catalytic mechanism. The phosphoenolpyruvate site is built by R346 and R387.

Belongs to the EPSP synthase family. In terms of assembly, monomer.

Its subcellular location is the cytoplasm. The enzyme catalyses 3-phosphoshikimate + phosphoenolpyruvate = 5-O-(1-carboxyvinyl)-3-phosphoshikimate + phosphate. It functions in the pathway metabolic intermediate biosynthesis; chorismate biosynthesis; chorismate from D-erythrose 4-phosphate and phosphoenolpyruvate: step 6/7. In terms of biological role, catalyzes the transfer of the enolpyruvyl moiety of phosphoenolpyruvate (PEP) to the 5-hydroxyl of shikimate-3-phosphate (S3P) to produce enolpyruvyl shikimate-3-phosphate and inorganic phosphate. This Legionella pneumophila subsp. pneumophila (strain Philadelphia 1 / ATCC 33152 / DSM 7513) protein is 3-phosphoshikimate 1-carboxyvinyltransferase.